The chain runs to 213 residues: Pyrrolidone-carboxylate peptidase (213 aa).

Active-site residues include E78, C141, and H165.

Belongs to the peptidase C15 family. In terms of assembly, homotetramer.

Its subcellular location is the cytoplasm. It catalyses the reaction Release of an N-terminal pyroglutamyl group from a polypeptide, the second amino acid generally not being Pro.. In terms of biological role, removes 5-oxoproline from various penultimate amino acid residues except L-proline. The sequence is that of Pyrrolidone-carboxylate peptidase from Clostridium perfringens (strain ATCC 13124 / DSM 756 / JCM 1290 / NCIMB 6125 / NCTC 8237 / Type A).